Here is a 539-residue protein sequence, read N- to C-terminus: Phosphatidylinositol 4-phosphate 5-kinase type-1 beta (539 aa).

Positions 1 to 21 (MSSTAENGDAVPGKQNEEKTY) are disordered. In terms of domain architecture, PIPK spans 25-395 (ASSAIKGAIQ…RFLKFMNSRV (371 aa)). Residues Ser-445, Ser-447, and Ser-448 each carry the phosphoserine modification.

Interacts with RAC1, AJUBA, PLD1, PLD2 and ARF1.

The protein resides in the cytoplasm. It is found in the cytosol. It localises to the cell membrane. Its subcellular location is the endomembrane system. The catalysed reaction is a 1,2-diacyl-sn-glycero-3-phospho-(1D-myo-inositol 4-phosphate) + ATP = a 1,2-diacyl-sn-glycero-3-phospho-(1D-myo-inositol-4,5-bisphosphate) + ADP + H(+). The enzyme catalyses 1-octadecanoyl-2-(5Z,8Z,11Z,14Z)-eicosatetraenoyl-sn-glycero-3-phospho-1D-myo-inositol 4-phosphate + ATP = 1-octadecanoyl-2-(5Z,8Z,11Z,14Z)-eicosatetraenoyl-sn-glycero-3-phospho-1D-myo-inositol 4,5-bisphosphate + ADP + H(+). It carries out the reaction 1-octadecanoyl-2-(9Z)-octadecenoyl-sn-glycero-3-phospho-1D-myo-inositol 4-phosphate + ATP = 1-octadecanoyl-2-(9Z)-octadecenoyl-sn-glycero-3-phospho-1D-myo-inositol 4,5-bisphosphate + ADP + H(+). It catalyses the reaction 1-octadecanoyl-2-(9Z)-octadecenoyl-sn-glycero-3-phospho-1D-myo-inositol + ATP = 1-octadecanoyl-2-(9Z)-octadecenoyl-sn-glycero-3-phospho-1D-myo-inositol 5-phosphate + ADP + H(+). The catalysed reaction is 1-octadecanoyl-2-(9Z,12Z)-octadecadienoyl-sn-glycero-3-phospho-1D-myo-inositol + ATP = 1-octadecanoyl-2-(9Z,12Z)-octadecadienoyl-sn-glycero-3-phospho-1D-myo-inositol 5-phosphate + ADP + H(+). The enzyme catalyses 1-octadecanoyl-2-(5Z,8Z,11Z,14Z-eicosatetraenoyl)-sn-glycero-3-phospho-(1D-myo-inositol) + ATP = 1-octadecanoyl-2-(5Z,8Z,11Z,14Z)-eicosatetraenoyl-sn-glycero-3-phospho-1D-myo-inositol 5-phosphate + ADP + H(+). It carries out the reaction 1,2-di-(9Z,12Z)-octadecadienoyl-sn-glycero-3-phospho-1D-myo-inositol + ATP = 1,2-di(9Z,12Z)-octadecadienoyl-sn-glycero-3-phospho-1D-myo-inositol 5-phosphate + ADP + H(+). Catalyzes the phosphorylation of phosphatidylinositol 4-phosphate (PtdIns(4)P/PI4P) to form phosphatidylinositol 4,5-bisphosphate (PtdIns(4,5)P2/PIP2), a lipid second messenger that regulates several cellular processes such as signal transduction, vesicle trafficking, actin cytoskeleton dynamics, cell adhesion, and cell motility. PtdIns(4,5)P2 can directly act as a second messenger or can be utilized as a precursor to generate other second messengers: inositol 1,4,5-trisphosphate (IP3), diacylglycerol (DAG) or phosphatidylinositol-3,4,5-trisphosphate (PtdIns(3,4,5)P3/PIP3). Mediates RAC1-dependent reorganization of actin filaments. Contributes to the activation of phospholipase PLD2. Together with PIP5K1A, is required, after stimulation by G-protein coupled receptors, for the synthesis of IP3 that will induce stable platelet adhesion. The sequence is that of Phosphatidylinositol 4-phosphate 5-kinase type-1 beta from Rattus norvegicus (Rat).